We begin with the raw amino-acid sequence, 444 residues long: Light-independent protochlorophyllide reductase subunit N (444 aa).

The [4Fe-4S] cluster site is built by C36, C61, and C118.

Belongs to the BchN/ChlN family. Protochlorophyllide reductase is composed of three subunits; BchL, BchN and BchB. Forms a heterotetramer of two BchB and two BchN subunits. The cofactor is [4Fe-4S] cluster.

The enzyme catalyses chlorophyllide a + oxidized 2[4Fe-4S]-[ferredoxin] + 2 ADP + 2 phosphate = protochlorophyllide a + reduced 2[4Fe-4S]-[ferredoxin] + 2 ATP + 2 H2O. It participates in porphyrin-containing compound metabolism; bacteriochlorophyll biosynthesis (light-independent). Component of the dark-operative protochlorophyllide reductase (DPOR) that uses Mg-ATP and reduced ferredoxin to reduce ring D of protochlorophyllide (Pchlide) to form chlorophyllide a (Chlide). This reaction is light-independent. The NB-protein (BchN-BchB) is the catalytic component of the complex. The sequence is that of Light-independent protochlorophyllide reductase subunit N from Chloroflexus aurantiacus (strain ATCC 29366 / DSM 635 / J-10-fl).